Consider the following 21-residue polypeptide: EFPTDYDEGEDDRPKVGLGAR.

Acidic residues predominate over residues 1–11; sequence EFPTDYDEGED. The disordered stretch occupies residues 1–21; sequence EFPTDYDEGEDDRPKVGLGAR. Position 6 is a sulfotyrosine (tyrosine 6).

Heterohexamer; disulfide linked. Contains 2 sets of 3 non-identical chains (alpha, beta and gamma). The 2 heterotrimers are in head to head conformation with the N-termini in a small central domain. In terms of processing, conversion of fibrinogen to fibrin is triggered by thrombin, which cleaves fibrinopeptides A and B from alpha and beta chains, and thus exposes the N-terminal polymerization sites responsible for the formation of the soft clot.

The protein localises to the secreted. Functionally, cleaved by the protease thrombin to yield monomers which, together with fibrinogen alpha (FGA) and fibrinogen gamma (FGG), polymerize to form an insoluble fibrin matrix. Fibrin has a major function in hemostasis as one of the primary components of blood clots. In addition, functions during the early stages of wound repair to stabilize the lesion and guide cell migration during re-epithelialization. Was originally thought to be essential for platelet aggregation, based on in vitro studies using anticoagulated blood. However subsequent studies have shown that it is not absolutely required for thrombus formation in vivo. Enhances expression of SELP in activated platelets. Maternal fibrinogen is essential for successful pregnancy. Fibrin deposition is also associated with infection, where it protects against IFNG-mediated hemorrhage. May also facilitate the antibacterial immune response via both innate and T-cell mediated pathways. This chain is Fibrinogen beta chain (FGB), found in Bison bonasus (European bison).